The sequence spans 381 residues: Chorismate synthase (381 aa).

Residues arginine 41 and arginine 47 each contribute to the NADP(+) site. FMN is bound by residues 127–129 (RAS), 247–248 (QA), glycine 291, 306–310 (KPIPT), and arginine 332.

It belongs to the chorismate synthase family. In terms of assembly, homotetramer. Requires FMNH2 as cofactor.

It catalyses the reaction 5-O-(1-carboxyvinyl)-3-phosphoshikimate = chorismate + phosphate. The protein operates within metabolic intermediate biosynthesis; chorismate biosynthesis; chorismate from D-erythrose 4-phosphate and phosphoenolpyruvate: step 7/7. Its function is as follows. Catalyzes the anti-1,4-elimination of the C-3 phosphate and the C-6 proR hydrogen from 5-enolpyruvylshikimate-3-phosphate (EPSP) to yield chorismate, which is the branch point compound that serves as the starting substrate for the three terminal pathways of aromatic amino acid biosynthesis. This reaction introduces a second double bond into the aromatic ring system. The polypeptide is Chorismate synthase (Anaeromyxobacter dehalogenans (strain 2CP-C)).